A 211-amino-acid polypeptide reads, in one-letter code: MNTTSSKSKKKQDDQVGTRFLGVRRRPWGRYAAEIRDPTTKERHWLGTFDTAEEAALAYDRAARSMRGTRARTNFVYSDMPPSSSVTSIVSPDDPPPPPPPPAPPSNDPVDYMMMFNQYSSTDSPMLQPHCDQVDSYMFGGSQSSNSYCYSNDSSNELPPLPSDLSNSCYSQPQWTWTGDDYSSEYVHSPMFSRMPPVSDSFPQGFNYFGS.

Disordered stretches follow at residues 1 to 21 and 74 to 110; these read MNTT…TRFL and NFVY…NDPV. Residues 19–76 constitute a DNA-binding region (AP2/ERF); sequence RFLGVRRRPWGRYAAEIRDPTTKERHWLGTFDTAEEAALAYDRAARSMRGTRARTNFV. Over residues 81-92 the composition is skewed to low complexity; the sequence is PPSSSVTSIVSP. A compositionally biased stretch (pro residues) spans 93–107; the sequence is DDPPPPPPPPAPPSN.

This sequence belongs to the AP2/ERF transcription factor family. ERF subfamily. Expressed in germinating seeds. Present in young shoots, at low levels, especially in leaf primordia and developing leaf blades. Also detected in vascular tissue, mostly in xylem, of young leaves, petioles and hypocotyls.

It is found in the nucleus. Cell division-promoting factor involved in leaf blade differentiation, inflorescence branching, as well as in carpel and silique shape. Promotes the number of xylem cells. Positively regulates the gibberellin signaling pathway leading to germination, hypocotyl elongation, and leaf expansion. Probably acts as a transcriptional activator. Binds to the GCC-box pathogenesis-related promoter element. May be involved in the regulation of gene expression by stress factors and by components of stress signal transduction pathways. In Arabidopsis thaliana (Mouse-ear cress), this protein is Ethylene-responsive transcription factor LEP (LEP).